The chain runs to 402 residues: LIM/homeobox protein Lhx5 (402 aa).

LIM zinc-binding domains follow at residues 3–61 and 62–125; these read VHCA…RRFG and TKCA…SSSL. The span at 124–135 shows a compositional bias: low complexity; it reads SLKEGSLNSVSS. 2 disordered regions span residues 124–186 and 298–402; these read SLKE…PRTT and HGPP…AAVW. A compositionally biased stretch (basic and acidic residues) spans 151–167; sequence DDPKETDNSTSSDKETA. Positions 180–239 form a DNA-binding region, homeobox; it reads RRGPRTTIKAKQLETLKAAFAATPKPTRHIREQLAQETGLNMRVIQVWFQNRRSKERRMK. Composition is skewed to low complexity over residues 300–311 and 322–336; these read PPSQAQSPADSS and PLGALEPPLAGPHAA.

Expressed in fetal brain and in various regions of the adult central nervous system including the spinal cord, the thalamus, and the cerebellum.

The protein localises to the nucleus. Its function is as follows. Plays an essential role in the regulation of neuronal differentiation and migration during development of the central nervous system. This chain is LIM/homeobox protein Lhx5 (LHX5), found in Homo sapiens (Human).